Consider the following 360-residue polypeptide: POU domain, class 5, transcription factor 1 (360 aa).

Disordered regions lie at residues 1–48 and 86–137; these read MAGH…SGIG and PPGG…EESQ. Residues 4–12 carry the 9aaTAD motif; it reads HLASDFAFS. Phosphoserine; by MAPK is present on Ser-111. Residue Lys-123 forms a Glycyl lysine isopeptide (Lys-Gly) (interchain with G-Cter in SUMO) linkage. Residues 123-137 show a composition bias toward basic and acidic residues; the sequence is KLDKEKLEPNPEESQ. The POU-specific domain maps to 138-212; it reads DIKALQKDLE…LLQKWVEEAD (75 aa). DNA-binding residues include Arg-157 and Gln-164. DNA-binding stretches follow at residues 180-186 and 193-196; these read SQTTICR and SFKN. The segment at residues 230–289 is a DNA-binding region (homeobox); that stretch reads RKRKRTSIENRVRGNLESMFLQCPKPTLQQISHIAQQLGLEKDVVRVWFCNRRQKGKRSS. Thr-235 carries the post-translational modification Phosphothreonine. Residues Ser-236, Ser-289, Ser-290, and Ser-355 each carry the phosphoserine modification. Residues 287–322 form a disordered region; the sequence is RSSSDYSQREDFEAAGSPFTGGPVSSPLAPGPHFGT.

It belongs to the POU transcription factor family. Class-5 subfamily. As to quaternary structure, interacts with PKM. Interacts with WWP2. Interacts with UBE2I and ZSCAN10. Interacts with PCGF1. Interacts with ESRRB; recruits ESRRB near the POU5F1-SOX2 element in the NANOG proximal promoter; the interaction is DNA independent. Interacts with MAPK8 and MAPK9; the interaction allows MAPK8 and MAPK9 to phosphorylate POU5F1 on Ser-355. Interacts (when phosphorylated on Ser-355) with FBXW8. Interacts with FBXW4. Interacts with SOX2 and SOX15; binds synergistically with either SOX2 or SOX15 to DNA. Interacts with DDX56. In terms of processing, sumoylation enhances the protein stability, DNA binding and transactivation activity. Sumoylation is required for enhanced YES1 expression. Post-translationally, ubiquitinated; undergoes 'Lys-63'-linked polyubiquitination by WWP2 leading to proteasomal degradation. ERK1/2-mediated phosphorylation at Ser-111 promotes nuclear exclusion and proteasomal degradation. Phosphorylation at Thr-235 and Ser-236 decrease DNA-binding and alters ability to activate transcription. As to expression, expressed in immature oocytes.

It is found in the cytoplasm. The protein localises to the nucleus. Its function is as follows. Transcription factor that binds to the octamer motif (5'-ATTTGCAT-3'). Forms a trimeric complex with SOX2 or SOX15 on DNA and controls the expression of a number of genes involved in embryonic development such as YES1, FGF4, UTF1 and ZFP206. Critical for early embryogenesis and for embryonic stem cell pluripotency. This chain is POU domain, class 5, transcription factor 1 (POU5F1), found in Bos taurus (Bovine).